Consider the following 268-residue polypeptide: Imidazole glycerol phosphate synthase subunit HisF (268 aa).

Residues Asp-12 and Asp-131 contribute to the active site.

Belongs to the HisA/HisF family. As to quaternary structure, heterodimer of HisH and HisF.

It localises to the cytoplasm. It catalyses the reaction 5-[(5-phospho-1-deoxy-D-ribulos-1-ylimino)methylamino]-1-(5-phospho-beta-D-ribosyl)imidazole-4-carboxamide + L-glutamine = D-erythro-1-(imidazol-4-yl)glycerol 3-phosphate + 5-amino-1-(5-phospho-beta-D-ribosyl)imidazole-4-carboxamide + L-glutamate + H(+). It functions in the pathway amino-acid biosynthesis; L-histidine biosynthesis; L-histidine from 5-phospho-alpha-D-ribose 1-diphosphate: step 5/9. IGPS catalyzes the conversion of PRFAR and glutamine to IGP, AICAR and glutamate. The HisF subunit catalyzes the cyclization activity that produces IGP and AICAR from PRFAR using the ammonia provided by the HisH subunit. The polypeptide is Imidazole glycerol phosphate synthase subunit HisF (Methanocorpusculum labreanum (strain ATCC 43576 / DSM 4855 / Z)).